The chain runs to 156 residues: Acyl carrier protein, mitochondrial (156 aa).

Residues 1–68 (MAVRVLCACV…GRVTQLCRQY (68 aa)) constitute a mitochondrion transit peptide. Residues 77–152 (EGIKDRVLYV…EIVDYIADKK (76 aa)) enclose the Carrier domain. Lys88 bears the N6-acetyllysine mark. Position 112 is an O-(pantetheine 4'-phosphoryl)serine (Ser112).

As to quaternary structure, mammalian complex I is composed of 45 different subunits. Interacts with ETFRF1. Identified in a complex composed of MALSU1, MIEF1 upstream open reading frame protein and NDUFAB1; within the trimeric complex MIEF1 upstream open reading frame protein functions as a bridging scaffold that interacts with MALSU1 on one side, and with NDUFAB1 on the other side. The complex interacts with the mitochondrial large ribosomal subunit. Interacts with alpha-1-microglobulin chain; this interaction is required for the maintenance of mitochondrial redox homeostasis. Component of the mitochondrial core iron-sulfur cluster (ISC) complex composed of NFS1, LYRM4, NDUFAB1, ISCU, FXN, and FDX2; this complex is a heterohexamer containing two copies of each monomer. Component of the cyteine desulfurase complex composed of NFS1, LYRM4 and NDUFAB1; this complex contributes to the stability and cysteine desulfurase activity of NFS1. Post-translationally, phosphopantetheinylation at Ser-112 is essential for interactions with LYR motif-containing proteins.

The protein localises to the mitochondrion. Its function is as follows. Carrier of the growing fatty acid chain in fatty acid biosynthesis. Accessory and non-catalytic subunit of the mitochondrial membrane respiratory chain NADH dehydrogenase (Complex I), which functions in the transfer of electrons from NADH to the respiratory chain. Accessory protein, of the core iron-sulfur cluster (ISC) assembly complex, that regulates, in association with LYRM4, the stability and the cysteine desulfurase activity of NFS1 and participates in the [2Fe-2S] clusters assembly on the scaffolding protein ISCU. The core iron-sulfur cluster (ISC) assembly complex is involved in the de novo synthesis of a [2Fe-2S] cluster, the first step of the mitochondrial iron-sulfur protein biogenesis. This process is initiated by the cysteine desulfurase complex (NFS1:LYRM4:NDUFAB1) that produces persulfide which is delivered on the scaffold protein ISCU in a FXN-dependent manner. Then this complex is stabilized by FDX2 which provides reducing equivalents to accomplish the [2Fe-2S] cluster assembly. Finally, the [2Fe-2S] cluster is transferred from ISCU to chaperone proteins, including HSCB, HSPA9 and GLRX5. The polypeptide is Acyl carrier protein, mitochondrial (Bos taurus (Bovine)).